Consider the following 346-residue polypeptide: Ribonucleoside-diphosphate reductase subunit beta (346 aa).

3 residues coordinate Fe cation: E89, E120, and H123. Y129 is a catalytic residue. Fe cation is bound by residues E193, E227, and H230.

Belongs to the ribonucleoside diphosphate reductase small chain family. In terms of assembly, tetramer of two alpha and two beta subunits. The cofactor is Fe cation.

It catalyses the reaction a 2'-deoxyribonucleoside 5'-diphosphate + [thioredoxin]-disulfide + H2O = a ribonucleoside 5'-diphosphate + [thioredoxin]-dithiol. Provides the precursors necessary for DNA synthesis. Catalyzes the biosynthesis of deoxyribonucleotides from the corresponding ribonucleotides. This chain is Ribonucleoside-diphosphate reductase subunit beta (nrdB), found in Chlamydia muridarum (strain MoPn / Nigg).